A 257-amino-acid polypeptide reads, in one-letter code: Adenylate kinase (257 aa).

Residue 52-57 (GAGKGT) participates in ATP binding. The interval 72–101 (ATGDMLRSQVAKKTELGKEAKKIMDQGGLV) is NMP. AMP contacts are provided by residues threonine 73, arginine 78, 99–101 (GLV), 128–131 (GFPR), and glutamine 135. The interval 169 to 206 (GRLVHPASGRSYHKIFNPPKNDMKDDVTGEPLIQRSDD) is LID. ATP is bound by residues arginine 170 and 179–180 (SY). AMP is bound by residues arginine 203 and arginine 214. Glutamine 242 provides a ligand contact to ATP.

Belongs to the adenylate kinase family. AK2 subfamily. As to quaternary structure, monomer.

It localises to the cytoplasm. Its subcellular location is the cytosol. The protein localises to the mitochondrion intermembrane space. It carries out the reaction AMP + ATP = 2 ADP. In terms of biological role, catalyzes the reversible transfer of the terminal phosphate group between ATP and AMP. Plays an important role in cellular energy homeostasis and in adenine nucleotide metabolism. Adenylate kinase activity is critical for regulation of the phosphate utilization and the AMP de novo biosynthesis pathways. The chain is Adenylate kinase (adk1) from Neosartorya fischeri (strain ATCC 1020 / DSM 3700 / CBS 544.65 / FGSC A1164 / JCM 1740 / NRRL 181 / WB 181) (Aspergillus fischerianus).